The primary structure comprises 136 residues: Large ribosomal subunit protein uL16c (136 aa).

It belongs to the universal ribosomal protein uL16 family. In terms of assembly, part of the 50S ribosomal subunit.

The protein localises to the plastid. Its subcellular location is the chloroplast. The sequence is that of Large ribosomal subunit protein uL16c from Chlamydomonas sp. (strain WXM).